The sequence spans 221 residues: Nucleolar protein 3 (221 aa).

Glycine 2 is lipidated: N-myristoyl glycine. The 92-residue stretch at 4–95 (MQERPSETID…MPDPAWDWQH (92 aa)) folds into the CARD domain. The tract at residues 20–70 (VETLQADSGLLLDALVARGVLTGPEYEALDALPDAERRVRRLLLLVQSKGE) is essential for interaction with BAX. The interval 107-221 (PPCPGHWTPE…GDESEGCENT (115 aa)) is disordered. Residues 132–143 (EEEEIGGPEDSE) show a composition bias toward acidic residues. Threonine 149 carries the phosphothreonine; by CK2 modification. 2 stretches are compositionally biased toward acidic residues: residues 165–201 (PDLEQEMEPEPEPEVEPEPEPEPEPEPEPEPEPEPEP) and 209–221 (FQEGDESEGCENT).

As to quaternary structure, oligomerizes (via CARD doamin). Interacts (via CARD domain) with CASP2; inhibits CASP2 activity in a phosphorylation-dependent manner. Interacts with CASP8; decreases CASP8 activity in a mitochondria localization- and phosphorylation-dependent manner and this interaction is dissociated by calcium. Interacts with TFPT; translocates NOL3 into the nucleus and negatively regulated TFPT-induced cell death. Interacts directly (via CARD domain) with FAS and FADD (via DED domain); inhibits death-inducing signaling complex (DISC) assembly by inhibiting the increase in FAS-FADD binding induced by FAS activation. Interacts (via CARD domain) with BAX (via a C-terminal 33 residues); inhibits BAX activation and translocation and consequently cytochrome c release from mitochondria. Interacts with PPM1G; may dephosphorylate NOL3. Interacts (via CARD domain) with BBC3 (via BH3 domain); preventing the association of BBC3 with BCL2 and resulting in activation of CASP8. Interacts (via CARD domain) with BAD(via BH3 domain); preventing the association of BAD with BCL2. Interacts directly (via CARD domain) with TNFRSF1A; inhibits TNF-signaling pathway. Phosphorylation at Thr-149 is required for its antiapoptotic effect by blocking death-inducing signaling complex (DISC) activity through the control of interaction with CASP8. Phosphorylation at Thr-149 results in translocation to mitochondria and this translocation enables the binding to CASP8. Dephosphorylated at Thr-149 by calcineurin; doesn't inhibit the association between FADD and CASP8 and the consequent apoptosis. Post-translationally, polyubiquitinated by MDM2; promoting proteasomal-dependent degradation in response to apoptotic stimuli. As to expression, highly expressed in skeletal muscle, heart and medulla.

It is found in the cytoplasm. It localises to the mitochondrion. The protein resides in the sarcoplasmic reticulum. Its subcellular location is the membrane. Its function is as follows. Apoptosis repressor that blocks multiple modes of cell death. Inhibits extrinsic apoptotic pathways through two different ways. Firstly by interacting with FAS and FADD upon FAS activation blocking death-inducing signaling complex (DISC) assembly. Secondly by interacting with CASP8 in a mitochondria localization- and phosphorylation-dependent manner, limiting the amount of soluble CASP8 available for DISC-mediated activation. Inhibits intrinsic apoptotic pathway in response to a wide range of stresses, through its interaction with BAX resulting in BAX inactivation, preventing mitochondrial dysfunction and release of pro-apoptotic factors. Inhibits calcium-mediated cell death by functioning as a cytosolic calcium buffer, dissociating its interaction with CASP8 and maintaining calcium homeostasis. Negatively regulates oxidative stress-induced apoptosis by phosphorylation-dependent suppression of the mitochondria-mediated intrinsic pathway, by blocking CASP2 activation and BAX translocation. Negatively regulates hypoxia-induced apoptosis in part by inhibiting the release of cytochrome c from mitochondria in a caspase-independent manner. Also inhibits TNF-induced necrosis by preventing TNF-signaling pathway through TNFRSF1A interaction abrogating the recruitment of RIPK1 to complex I. Finally through its role as apoptosis repressor, promotes vascular remodeling through inhibition of apoptosis and stimulation of proliferation, in response to hypoxia. Inhibits too myoblast differentiation through caspase inhibition. This is Nucleolar protein 3 (Nol3) from Rattus norvegicus (Rat).